The sequence spans 345 residues: Short-wave-sensitive opsin 1 (345 aa).

The Extracellular portion of the chain corresponds to 1-30; that stretch reads MSEEEFYLFKNISSVGPWDGPQYHIAPVWA. Asparagine 11 carries N-linked (GlcNAc...) asparagine glycosylation. Residues 31 to 55 traverse the membrane as a helical segment; sequence FYLQAAFMGTVFLIGFPLNAMVLVA. At 56 to 67 the chain is on the cytoplasmic side; that stretch reads TLRYKKLRQPLN. Residues 68 to 93 traverse the membrane as a helical segment; sequence YILVNVSFGGFLLCIFSVFPVFVASC. Topologically, residues 94-107 are extracellular; the sequence is NGYFVFGRHVCALE. Cysteine 104 and cysteine 181 form a disulfide bridge. Residues 108 to 127 traverse the membrane as a helical segment; sequence GFLGTVAGLVTGWSLAFLAF. The Cytoplasmic segment spans residues 128–146; that stretch reads ERYIVICKPFGNFRFSSKH. The helical transmembrane segment at 147–170 threads the bilayer; sequence ALTVVLATWTIGIGVSIPPFFGWS. Topologically, residues 171–196 are extracellular; the sequence is RFIPEGLQCSCGPDWYTVGTKYRSES. The chain crosses the membrane as a helical span at residues 197–224; it reads YTWFLFIFCFIVPLSLICFSYTQLLRAL. The Cytoplasmic portion of the chain corresponds to 225–246; it reads KAVAAQQQESATTQKAEREVSR. The chain crosses the membrane as a helical span at residues 247-270; the sequence is MVVVMVGSFCVCYVPYAAFAMYMV. Residues 271-278 are Extracellular-facing; the sequence is NNRNHGLD. Residues 279–303 form a helical membrane-spanning segment; sequence LRLVTIPSFFSKSACIYNPIIYCFM. Lysine 290 carries the N6-(retinylidene)lysine modification. At 304–345 the chain is on the cytoplasmic side; it reads NKQFQACIMKMVCGKAMTDESDTCSSQKTEVSTVSSTQVGPN.

Belongs to the G-protein coupled receptor 1 family. Opsin subfamily. Post-translationally, phosphorylated on some or all of the serine and threonine residues present in the C-terminal region. As to expression, the three color pigments are found in the cone photoreceptor cells. Expressed throughout the epidermis and dermis, primarily in the stratum granulosum in the facial and abdominal skin (at protein level). Expressed in dermal fibroblasts (at protein level). Expressed in melanocytes (at protein level).

Its subcellular location is the cell membrane. It is found in the photoreceptor inner segment. The protein localises to the cell projection. The protein resides in the cilium. It localises to the photoreceptor outer segment. Its subcellular location is the cytoplasm. It is found in the perinuclear region. Visual pigments are the light-absorbing molecules that mediate vision. They consist of an apoprotein, opsin, covalently linked to cis-retinal. Required for the maintenance of cone outer segment organization in the ventral retina, but not essential for the maintenance of functioning cone photoreceptors. Involved in ensuring correct abundance and localization of retinal membrane proteins. May increase spectral sensitivity in dim light. This Homo sapiens (Human) protein is Short-wave-sensitive opsin 1 (OPN1SW).